The sequence spans 169 residues: MSQDFVEIAKIGATYKLNGELNLYPLANSIETLLSYGDWYIQLPATNVWQQLKGESVLKRADKVYIKLANINNADTAKKYVNALIGVPKRALPQLAEDEVYFKDLIGCSVKNINNDSFGVVVDIIETDANEVLVCKEDNSEYLIPYVKQYIVSEDLNSKKIVVDWEYDY.

Positions 97–169 (EDEVYFKDLI…KIVVDWEYDY (73 aa)) constitute a PRC barrel domain.

The protein belongs to the RimM family. Binds ribosomal protein uS19.

The protein localises to the cytoplasm. An accessory protein needed during the final step in the assembly of 30S ribosomal subunit, possibly for assembly of the head region. Essential for efficient processing of 16S rRNA. May be needed both before and after RbfA during the maturation of 16S rRNA. It has affinity for free ribosomal 30S subunits but not for 70S ribosomes. In Francisella tularensis subsp. tularensis (strain FSC 198), this protein is Ribosome maturation factor RimM.